Reading from the N-terminus, the 362-residue chain is Protein RecA (362 aa).

Gly-77–Thr-84 contributes to the ATP binding site.

Belongs to the RecA family.

The protein resides in the cytoplasm. Functionally, can catalyze the hydrolysis of ATP in the presence of single-stranded DNA, the ATP-dependent uptake of single-stranded DNA by duplex DNA, and the ATP-dependent hybridization of homologous single-stranded DNAs. It interacts with LexA causing its activation and leading to its autocatalytic cleavage. This chain is Protein RecA, found in Rhizobium etli (strain ATCC 51251 / DSM 11541 / JCM 21823 / NBRC 15573 / CFN 42).